The chain runs to 365 residues: tRNA 2-selenouridine synthase (365 aa).

The Rhodanese domain maps to 15-138; the sequence is FIAGQPLIDL…MRQYLIGVIE (124 aa). Cys-98 serves as the catalytic S-selanylcysteine intermediate.

This sequence belongs to the SelU family. As to quaternary structure, monomer.

The enzyme catalyses 5-methylaminomethyl-2-thiouridine(34) in tRNA + selenophosphate + (2E)-geranyl diphosphate + H2O + H(+) = 5-methylaminomethyl-2-selenouridine(34) in tRNA + (2E)-thiogeraniol + phosphate + diphosphate. It catalyses the reaction 5-methylaminomethyl-2-thiouridine(34) in tRNA + (2E)-geranyl diphosphate = 5-methylaminomethyl-S-(2E)-geranyl-thiouridine(34) in tRNA + diphosphate. It carries out the reaction 5-methylaminomethyl-S-(2E)-geranyl-thiouridine(34) in tRNA + selenophosphate + H(+) = 5-methylaminomethyl-2-(Se-phospho)selenouridine(34) in tRNA + (2E)-thiogeraniol. The catalysed reaction is 5-methylaminomethyl-2-(Se-phospho)selenouridine(34) in tRNA + H2O = 5-methylaminomethyl-2-selenouridine(34) in tRNA + phosphate. Its function is as follows. Involved in the post-transcriptional modification of the uridine at the wobble position (U34) of tRNA(Lys), tRNA(Glu) and tRNA(Gln). Catalyzes the conversion of 2-thiouridine (S2U-RNA) to 2-selenouridine (Se2U-RNA). Acts in a two-step process involving geranylation of 2-thiouridine (S2U) to S-geranyl-2-thiouridine (geS2U) and subsequent selenation of the latter derivative to 2-selenouridine (Se2U) in the tRNA chain. This is tRNA 2-selenouridine synthase from Shewanella sp. (strain ANA-3).